Consider the following 318-residue polypeptide: Endochitinase 1 (318 aa).

An N-terminal signal peptide occupies residues 1 to 18 (EFTTLFLLFSVLLLSASA). Residues 19 to 60 (EQCGSQAGGALCASGLCCSKFGWCGDTNDYCGPGNCQSQCPG) enclose the Chitin-binding type-1 domain. Disulfide bonds link C21–C36, C30–C42, C35–C49, C54–C58, C89–C152, C164–C172, and C271–C303. E134 functions as the Proton donor in the catalytic mechanism. Positions 312 to 318 (GLLVDTM) are cleaved as a propeptide — removed in mature form, vacuolar targeting.

It belongs to the glycosyl hydrolase 19 family. Chitinase class I subfamily.

Its subcellular location is the vacuole. It catalyses the reaction Random endo-hydrolysis of N-acetyl-beta-D-glucosaminide (1-&gt;4)-beta-linkages in chitin and chitodextrins.. In terms of biological role, defense against chitin-containing fungal pathogens. The chain is Endochitinase 1 (CHTB1) from Solanum tuberosum (Potato).